A 706-amino-acid polypeptide reads, in one-letter code: Ribosomal RNA large subunit methyltransferase K/L (706 aa).

A THUMP domain is found at 43–154 (LMYQSLLWSR…RDMASVALDL (112 aa)).

This sequence belongs to the methyltransferase superfamily. RlmKL family.

The protein localises to the cytoplasm. It carries out the reaction guanosine(2445) in 23S rRNA + S-adenosyl-L-methionine = N(2)-methylguanosine(2445) in 23S rRNA + S-adenosyl-L-homocysteine + H(+). The enzyme catalyses guanosine(2069) in 23S rRNA + S-adenosyl-L-methionine = N(2)-methylguanosine(2069) in 23S rRNA + S-adenosyl-L-homocysteine + H(+). Its function is as follows. Specifically methylates the guanine in position 2445 (m2G2445) and the guanine in position 2069 (m7G2069) of 23S rRNA. This chain is Ribosomal RNA large subunit methyltransferase K/L, found in Yersinia pseudotuberculosis serotype O:1b (strain IP 31758).